We begin with the raw amino-acid sequence, 436 residues long: MQKTAPRPLPARISFLSASVLGLGAAVASRGAVFVSNILLAHSLTVHDFGLFSYAYVTALNLGLFLATGVSQAAGHVLPLIENPERKRTQLCAFIVLLMALIAVAAAALYLSSASISVAAFGSEQGSGALRMAAIVLIATAFTQALQSFQYAMHEHRSSATISIGAAVLLLTMLWAMGPIRQPALALTIFLAVNAGAAVSQLLVLARATPSQRGPWRTGREELRLAVKHALPSVLTTSMGAPVHWICLSMLAAMTDGAHQLALFSVAFQWYIAITFIPATLGNLALPFLARHAGATETTVRQRFRSALLFGGGLSLALGCASFLLAGEIFAWFYPAEYGSAASSMRSLSVAAALCGVSVLLQQRIAAAGKFWRNFAMAAVYSVIYVAASYLALRLGFGATSIGLAMSAAYCCLILFQTLTLQGDSGAAIRLGRSFS.

Transmembrane regions (helical) follow at residues 20–40 (VLGLGAAVASRGAVFVSNILL), 49–69 (FGLFSYAYVTALNLGLFLATG), 91–111 (LCAFIVLLMALIAVAAAALYL), 133–153 (AAIVLIATAFTQALQSFQYAM), 160–180 (ATISIGAAVLLLTMLWAMGPI), 185–205 (LALTIFLAVNAGAAVSQLLVL), 234–254 (VLTTSMGAPVHWICLSMLAAM), 261–281 (LALFSVAFQWYIAITFIPATL), 307–327 (ALLFGGGLSLALGCASFLLAG), 341–361 (AASSMRSLSVAAALCGVSVLL), 375–395 (FAMAAVYSVIYVAASYLALRL), and 396–416 (GFGATSIGLAMSAAYCCLILF).

This sequence to E.coli bicyclomycin resistance protein (BCR).

The protein resides in the cell inner membrane. Functionally, probably involved in polymerization and/or export of exopolysaccharide EPS I which functions as a virulence factor. May play a role in export of EPS I or its intermediates across the membranes. This Ralstonia solanacearum (Pseudomonas solanacearum) protein is EPS I polysaccharide export inner membrane protein EpsE (epsE).